The following is a 431-amino-acid chain: Septin-11 (431 aa).

Residue Ala2 is modified to N-acetylalanine. Ser9 carries the phosphoserine modification. The Septin-type G domain occupies 38 to 304 (QGFCFNILCV…ELYRRCKLEE (267 aa)). Positions 48-55 (GETGIGKS) are G1 motif. Residues 48-55 (GETGIGKS), Gly103, 184-192 (KADTIAKNE), Gly238, and Arg253 contribute to the GTP site. Residues 100 to 103 (DTVG) form a G3 motif region. Residues 183–186 (AKAD) form a G4 motif region. Residues 320–413 (QETYEAKRNE…LLQSQAQQSG (94 aa)) adopt a coiled-coil conformation. Positions 400-431 (AAAQLLQSQAQQSGAQQTKKDKDKKNPWLCTE) are disordered. The span at 401–416 (AAQLLQSQAQQSGAQQ) shows a compositional bias: low complexity.

It belongs to the TRAFAC class TrmE-Era-EngA-EngB-Septin-like GTPase superfamily. Septin GTPase family. In terms of assembly, septins polymerize into heterooligomeric protein complexes that form filaments, and can associate with cellular membranes, actin filaments and microtubules. Forms homooligomers. GTPase activity is required for filament formation. Interacts with SEPTIN7, SEPTIN9 and SEPTIN12. As to expression, expressed in the cerebral cortex (at protein level).

The protein localises to the cytoplasm. It is found in the cytoskeleton. It localises to the synapse. The protein resides in the cell projection. Its subcellular location is the dendritic spine. The protein localises to the axon. Its function is as follows. Filament-forming cytoskeletal GTPase. May play a role in cytokinesis (Potential). May play a role in the cytoarchitecture of neurons, including dendritic arborization and dendritic spines, and in GABAergic synaptic connectivity. The polypeptide is Septin-11 (Mus musculus (Mouse)).